The chain runs to 542 residues: CTP synthase (542 aa).

Residues Met1–Ile265 form an amidoligase domain region. Ser13 lines the CTP pocket. Ser13 is a binding site for UTP. Residues Ser14–Ile19 and Asp71 each bind ATP. Mg(2+)-binding residues include Asp71 and Glu139. CTP-binding positions include Asp146–Glu148, Lys186–Gln191, and Lys222. UTP is bound by residues Lys186 to Gln191 and Lys222. Residues Thr291–Leu541 enclose the Glutamine amidotransferase type-1 domain. Gly353 provides a ligand contact to L-glutamine. The active-site Nucleophile; for glutamine hydrolysis is the Cys380. L-glutamine is bound by residues Phe381 to Gln384, Glu404, and Arg469. Active-site residues include His514 and Glu516.

The protein belongs to the CTP synthase family. Homotetramer.

The catalysed reaction is UTP + L-glutamine + ATP + H2O = CTP + L-glutamate + ADP + phosphate + 2 H(+). It catalyses the reaction L-glutamine + H2O = L-glutamate + NH4(+). It carries out the reaction UTP + NH4(+) + ATP = CTP + ADP + phosphate + 2 H(+). It functions in the pathway pyrimidine metabolism; CTP biosynthesis via de novo pathway; CTP from UDP: step 2/2. Allosterically activated by GTP, when glutamine is the substrate; GTP has no effect on the reaction when ammonia is the substrate. The allosteric effector GTP functions by stabilizing the protein conformation that binds the tetrahedral intermediate(s) formed during glutamine hydrolysis. Inhibited by the product CTP, via allosteric rather than competitive inhibition. Its function is as follows. Catalyzes the ATP-dependent amination of UTP to CTP with either L-glutamine or ammonia as the source of nitrogen. Regulates intracellular CTP levels through interactions with the four ribonucleotide triphosphates. The sequence is that of CTP synthase from Rhizobium meliloti (strain 1021) (Ensifer meliloti).